A 130-amino-acid chain; its full sequence is Small ribosomal subunit protein uS11 (130 aa).

This sequence belongs to the universal ribosomal protein uS11 family. Part of the 30S ribosomal subunit. Interacts with proteins S7 and S18. Binds to IF-3.

In terms of biological role, located on the platform of the 30S subunit, it bridges several disparate RNA helices of the 16S rRNA. Forms part of the Shine-Dalgarno cleft in the 70S ribosome. This Helicobacter hepaticus (strain ATCC 51449 / 3B1) protein is Small ribosomal subunit protein uS11.